The chain runs to 39 residues: Osmotin-like protein (39 aa).

Belongs to the thaumatin family. Contains intrachain disulfide bonds.

May be an important antifungal protein. The sequence is that of Osmotin-like protein from Hevea brasiliensis (Para rubber tree).